A 468-amino-acid chain; its full sequence is Cysteine--tRNA ligase (468 aa).

Zn(2+) is bound at residue C36. The short motif at 38 to 48 (PTVYNRSHIGN) is the 'HIGH' region element. Positions 216, 241, and 245 each coordinate Zn(2+). Residues 274-278 (KMSKS) carry the 'KMSKS' region motif. K277 serves as a coordination point for ATP.

This sequence belongs to the class-I aminoacyl-tRNA synthetase family. As to quaternary structure, monomer. Zn(2+) is required as a cofactor.

The protein localises to the cytoplasm. The catalysed reaction is tRNA(Cys) + L-cysteine + ATP = L-cysteinyl-tRNA(Cys) + AMP + diphosphate. The polypeptide is Cysteine--tRNA ligase (Parvibaculum lavamentivorans (strain DS-1 / DSM 13023 / NCIMB 13966)).